We begin with the raw amino-acid sequence, 306 residues long: N-acetylmuramic acid 6-phosphate etherase (306 aa).

The region spanning 59–222 (TSQALAKGGR…STGTMVMLGK (164 aa)) is the SIS domain. Glu87 serves as the catalytic Proton donor. The active site involves Glu118.

The protein belongs to the GCKR-like family. MurNAc-6-P etherase subfamily. As to quaternary structure, homodimer.

The catalysed reaction is N-acetyl-D-muramate 6-phosphate + H2O = N-acetyl-D-glucosamine 6-phosphate + (R)-lactate. The protein operates within amino-sugar metabolism; N-acetylmuramate degradation. Specifically catalyzes the cleavage of the D-lactyl ether substituent of MurNAc 6-phosphate, producing GlcNAc 6-phosphate and D-lactate. The polypeptide is N-acetylmuramic acid 6-phosphate etherase (Microcystis aeruginosa (strain NIES-843 / IAM M-2473)).